The sequence spans 316 residues: Taste receptor type 2 member 109 (316 aa).

The Extracellular segment spans residues 1 to 14; it reads MEHLLKRTFDITEN. A helical membrane pass occupies residues 15–35; the sequence is ILLIILFIELIIGLIGNGFTA. At 36–62 the chain is on the cytoplasmic side; that stretch reads LVHCMDWVKRKKMSLVNKILTALATSR. A helical membrane pass occupies residues 63-83; sequence IFLLWFMLVGFPISSLYPYLV. The Extracellular portion of the chain corresponds to 84-94; it reads TTRLMIQFTST. The chain crosses the membrane as a helical span at residues 95-115; it reads LWTIANHISVWFATCLSVFYF. Over 116 to 135 the chain is Cytoplasmic; sequence LKIANFSNSPFLYLKRRVEK. Residues 136–156 traverse the membrane as a helical segment; it reads VVSVTLLVSLVLLFLNILLLN. Residues 157-191 lie on the Extracellular side of the membrane; sequence LEINMCINEYHQINISYIFISYYHLSCQIQVLGSH. An N-linked (GlcNAc...) asparagine glycan is attached at asparagine 170. A helical membrane pass occupies residues 192–212; sequence IIFLSVPVVLSLSTFLLLIFS. Residues 213 to 241 are Cytoplasmic-facing; that stretch reads LWTLHKRMQQHVQGGRDARTTAHFKALQA. A helical membrane pass occupies residues 242–262; the sequence is VIAFLLLYSIFILSLLLQFWI. Residues 263–270 lie on the Extracellular side of the membrane; the sequence is HGLRKKPP. Residues 271 to 291 form a helical membrane-spanning segment; sequence FIAFCQVVDTAFPSFHSYVLI. Topologically, residues 292-316 are cytoplasmic; sequence LRDRKLRHASLSVLSWLKCRPNYVK.

The protein belongs to the G-protein coupled receptor T2R family.

Its subcellular location is the membrane. In terms of biological role, putative taste receptor which may play a role in the perception of bitterness. This is Taste receptor type 2 member 109 from Mus musculus (Mouse).